A 236-amino-acid chain; its full sequence is MASMAFSTTFFTPLRDFNQPRTNSTPSTSLPFTKSSIASSKSPFFQLGFSQQASSNFPIVPSKTRSFSVNAKAIKDKTIYDFTVKDIDKKDVSLSKFKGKVLLIVNVASRCGLTSSNYTELSHLYENFKNKGLEVLAFPCNQFGMQEPGSNEEIKQFACTKFKAEFPIFDKVDVNGPFTAPVYQFLKSSSGGFFGDIVKWNFEKFLVDKNGKVVERYPPTTSPFQIEKDIQKLLAA.

The N-terminal 64 residues, 1-64 (MASMAFSTTF…SNFPIVPSKT (64 aa)), are a transit peptide targeting the chloroplast. Residue C111 is part of the active site.

The protein belongs to the glutathione peroxidase family.

It localises to the plastid. The protein resides in the chloroplast stroma. The catalysed reaction is a hydroperoxy polyunsaturated fatty acid + 2 glutathione = a hydroxy polyunsaturated fatty acid + glutathione disulfide + H2O. Functionally, protects cells and enzymes from oxidative damage, by catalyzing the reduction of hydrogen peroxide, lipid peroxides and organic hydroperoxide, by glutathione. The polypeptide is Phospholipid hydroperoxide glutathione peroxidase, chloroplastic (Pisum sativum (Garden pea)).